A 254-amino-acid chain; its full sequence is Imidazole glycerol phosphate synthase subunit HisF (254 aa).

Residues aspartate 12 and aspartate 131 contribute to the active site.

Belongs to the HisA/HisF family. As to quaternary structure, heterodimer of HisH and HisF.

It localises to the cytoplasm. It carries out the reaction 5-[(5-phospho-1-deoxy-D-ribulos-1-ylimino)methylamino]-1-(5-phospho-beta-D-ribosyl)imidazole-4-carboxamide + L-glutamine = D-erythro-1-(imidazol-4-yl)glycerol 3-phosphate + 5-amino-1-(5-phospho-beta-D-ribosyl)imidazole-4-carboxamide + L-glutamate + H(+). Its pathway is amino-acid biosynthesis; L-histidine biosynthesis; L-histidine from 5-phospho-alpha-D-ribose 1-diphosphate: step 5/9. Its function is as follows. IGPS catalyzes the conversion of PRFAR and glutamine to IGP, AICAR and glutamate. The HisF subunit catalyzes the cyclization activity that produces IGP and AICAR from PRFAR using the ammonia provided by the HisH subunit. This is Imidazole glycerol phosphate synthase subunit HisF from Kocuria rhizophila (strain ATCC 9341 / DSM 348 / NBRC 103217 / DC2201).